Reading from the N-terminus, the 740-residue chain is Putative Pol polyprotein from transposon element Bs1 (740 aa).

A PPR repeat occupies 469 to 503 (TAVAHNLLVQALFMDGRASDAYVVLEEMQNNGPFP).

Its function is as follows. Bs1 is probably an active plant retrotransposon. The protein is Putative Pol polyprotein from transposon element Bs1 of Zea mays (Maize).